The primary structure comprises 889 residues: Coatomer subunit beta' (889 aa).

WD repeat units lie at residues 11–41 (NRSD…ELWN), 53–83 (VTET…RVFN), 95–125 (AHPD…KLWN), 138–169 (GHEH…KVWS), 182–214 (GQER…KIWD), and 226–256 (GHMS…KIWN). At Ser-326 the chain carries Phosphoserine. A disordered region spans residues 806-889 (CGAEGLPGSS…AVPEPVEEES (84 aa)). The span at 836 to 864 (DENKEAEVEDSEFKESNSEAVEAEKKEEE) shows a compositional bias: basic and acidic residues. The segment covering 866–879 (PQQQQSEQQPEQGE) has biased composition (low complexity).

It belongs to the WD repeat COPB2 family. In terms of assembly, oligomeric complex that consists of at least the alpha, beta, beta', gamma, delta, epsilon and zeta subunits. Interacts with the ESCRT-0 subunit VPS27.

It is found in the cytoplasm. It localises to the golgi apparatus membrane. The protein resides in the cytoplasmic vesicle. The protein localises to the COPI-coated vesicle membrane. In terms of biological role, the coatomer is a cytosolic protein complex that binds to dilysine motifs and reversibly associates with Golgi non-clathrin-coated vesicles, which further mediate biosynthetic protein transport from the ER, via the Golgi up to the trans Golgi network. Coatomer complex is required for budding from Golgi membranes, and is essential for the retrograde Golgi-to-ER transport of dilysine-tagged proteins. The chain is Coatomer subunit beta' (SEC27) from Saccharomyces cerevisiae (strain ATCC 204508 / S288c) (Baker's yeast).